The chain runs to 625 residues: Thioredoxin domain-containing protein 6 (625 aa).

The interval 158 to 302 (KSYTVAIIKP…FFFPNFKISN (145 aa)) is NDK. Residues 594–625 (GETPETSASDISRNAAAQGDDPEQDESKEMEE) form a disordered region. The segment covering 613 to 625 (DDPEQDESKEMEE) has biased composition (acidic residues).

It belongs to the NDK family. As to quaternary structure, monomer and homodimer.

It localises to the cytoplasm. Its subcellular location is the cytoskeleton. It is found in the cilium axoneme. The protein resides in the dynein axonemal particle. Its function is as follows. May be a regulator of microtubule physiology. In Xenopus laevis (African clawed frog), this protein is Thioredoxin domain-containing protein 6.